The chain runs to 212 residues: Protein-L-isoaspartate O-methyltransferase (212 aa).

Ser-60 is a catalytic residue.

This sequence belongs to the methyltransferase superfamily. L-isoaspartyl/D-aspartyl protein methyltransferase family.

The protein resides in the cytoplasm. It catalyses the reaction [protein]-L-isoaspartate + S-adenosyl-L-methionine = [protein]-L-isoaspartate alpha-methyl ester + S-adenosyl-L-homocysteine. Its function is as follows. Catalyzes the methyl esterification of L-isoaspartyl residues in peptides and proteins that result from spontaneous decomposition of normal L-aspartyl and L-asparaginyl residues. It plays a role in the repair and/or degradation of damaged proteins. This chain is Protein-L-isoaspartate O-methyltransferase, found in Methanococcus maripaludis (strain C7 / ATCC BAA-1331).